A 142-amino-acid chain; its full sequence is Large ribosomal subunit protein bL17 (142 aa).

This sequence belongs to the bacterial ribosomal protein bL17 family. In terms of assembly, part of the 50S ribosomal subunit. Contacts protein L32.

The sequence is that of Large ribosomal subunit protein bL17 from Rickettsia bellii (strain OSU 85-389).